The primary structure comprises 346 residues: MAEACRVRRMKLGSQGLEVSAQGLGCMALSARYGAPKPETDAIALLHHAINSGVTFFDTSDMYGPETNELLLGKALKDGVKEKVELATKFGFFIVEGEISEVRGDPEYVRAACEASLKRLDIACIDLYYQHRIDTRVPIEITMRELKKLVEEGKIKYIGLSEASASTIRRAHAVHPITAVQIEWSLWSRDAEEDIIPICRELGIGIVAYSPLGRGFLAAGPKLAENLENDDFRKTLPRFQQENVDHNKILFEKVSAMAEKKGCTPAQLALAWVHHQGDDVCPIPGTTKIENLNQNIRALSVKLTPEEISELDSLAKPESVKGERYMASMSTFKNSNTPPLSSWKAT.

The active-site Proton donor is the Tyr-63. His-131 is a binding site for substrate. 210 to 220 (SPLGRGFLAAG) contributes to the NADP(+) binding site.

Belongs to the aldo/keto reductase family. Aldo/keto reductase 13 subfamily.

This Arabidopsis thaliana (Mouse-ear cress) protein is Probable aldo-keto reductase 2 (AGD2).